A 198-amino-acid chain; its full sequence is Dual specificity protein phosphatase 13B (198 aa).

The Tyrosine-protein phosphatase domain maps to 45–193; sequence HINEVWPNLF…LQVLDNRLRR (149 aa). The active-site Phosphocysteine intermediate is the Cys138.

It belongs to the protein-tyrosine phosphatase family. Non-receptor class dual specificity subfamily. Most abundantly expressed in the testis.

It carries out the reaction O-phospho-L-tyrosyl-[protein] + H2O = L-tyrosyl-[protein] + phosphate. It catalyses the reaction O-phospho-L-seryl-[protein] + H2O = L-seryl-[protein] + phosphate. The enzyme catalyses O-phospho-L-threonyl-[protein] + H2O = L-threonyl-[protein] + phosphate. Its function is as follows. Dual specificity phosphatase that dephosphorylates MAPK8/JNK and MAPK14/p38, but not MAPK1/ERK2, in vitro. Exhibits intrinsic phosphatase activity towards both phospho-seryl/threonyl and -tyrosyl residues, with similar specific activities in vitro. The protein is Dual specificity protein phosphatase 13B of Mus musculus (Mouse).